A 592-amino-acid polypeptide reads, in one-letter code: Serine/threonine-protein kinase ksg1 (592 aa).

Residues M1 to T10 are compositionally biased toward polar residues. The interval M1–N92 is disordered. Acidic residues predominate over residues E11–S22. Positions S27 to N37 are enriched in basic and acidic residues. The segment covering P42–S68 has biased composition (polar residues). 2 positions are modified to phosphoserine: S64 and S69. The segment covering S80–N92 has biased composition (polar residues). Residues F99 to F366 form the Protein kinase domain. ATP contacts are provided by residues S109–S111 and K128. Positions L130–F175 are PIF-pocket. ATP contacts are provided by residues S178–A180 and E184. D223 functions as the Proton acceptor in the catalytic mechanism. ATP contacts are provided by E227 and D241. The region spanning I461 to S572 is the PH domain.

It belongs to the protein kinase superfamily. AGC Ser/Thr protein kinase family. PDPK1 subfamily.

It localises to the cytoplasm. It catalyses the reaction L-seryl-[protein] + ATP = O-phospho-L-seryl-[protein] + ADP + H(+). The catalysed reaction is L-threonyl-[protein] + ATP = O-phospho-L-threonyl-[protein] + ADP + H(+). Its function is as follows. Involved in the control of sexual development and cell growth under stressed conditions. Phosphorylates AGC kinase gad8 at 'Thr-387', activating gad8 kinase activity and promoting sexual development. Phosphorylates AGC kinase psk1 at 'Ser-248', activating psk1 kinase activity and promoting phosphorylation of ribosomal protein S6. This chain is Serine/threonine-protein kinase ksg1, found in Schizosaccharomyces pombe (strain 972 / ATCC 24843) (Fission yeast).